The following is a 199-amino-acid chain: Shikimate kinase (199 aa).

14 to 19 (GSGKST) contacts ATP. Serine 18 contacts Mg(2+). Positions 36, 60, and 82 each coordinate substrate. Arginine 120 contacts ATP. Arginine 147 serves as a coordination point for substrate.

This sequence belongs to the shikimate kinase family. In terms of assembly, monomer. It depends on Mg(2+) as a cofactor.

It localises to the cytoplasm. The catalysed reaction is shikimate + ATP = 3-phosphoshikimate + ADP + H(+). It functions in the pathway metabolic intermediate biosynthesis; chorismate biosynthesis; chorismate from D-erythrose 4-phosphate and phosphoenolpyruvate: step 5/7. Its function is as follows. Catalyzes the specific phosphorylation of the 3-hydroxyl group of shikimic acid using ATP as a cosubstrate. This is Shikimate kinase from Chlorobium limicola (strain DSM 245 / NBRC 103803 / 6330).